The chain runs to 707 residues: E3 ubiquitin-protein ligase Praja-2 (707 aa).

Over residues 1–10 the composition is skewed to basic and acidic residues; the sequence is MSQYTEKEPS. 3 disordered regions span residues 1-32, 72-120, and 250-314; these read MSQY…QTIT, PKEN…PSIA, and QNGQ…VRPK. Ser2 is modified (N-acetylserine). Polar residues-rich tracts occupy residues 74–83 and 109–119; these read ENTSGSSSLD and LNQSTESSPSI. Basic and acidic residues predominate over residues 257–276; it reads RSSEDGVVRKRRQDDTDQGR. Positions 293-308 are enriched in polar residues; it reads EQNTSDRANHHGSSPE. Phosphoserine is present on residues Ser306 and Ser320. A Phosphoserine; by PKA modification is found at Ser339. Disordered regions lie at residues 379–405 and 424–493; these read RVTQ…QESR and EDSS…QTSL. Over residues 381–390 the composition is skewed to basic and acidic residues; sequence TQRETERNRV. At Thr385 the chain carries Phosphothreonine; by PKA. A compositionally biased stretch (polar residues) spans 391-401; the sequence is TSENGATASGR. Position 430 is a phosphoserine (Ser430). The span at 465-481 shows a compositional bias: acidic residues; it reads NDPELQSDSSGPEEENQ. Residues 482 to 491 are compositionally biased toward polar residues; sequence ELSLQEGEQT. Residues 530 to 707 are interaction with PRKAR1A, PRKAR2A and PRKAR2B; it reads DGNNNLEDDS…PANDNAEEAP (178 aa). The segment at 549 to 569 is mediates interaction with TBC1D31; sequence WSLFDGFADGLGVAEAISYVD. An RING-type; atypical zinc finger spans residues 633 to 674; sequence CPICCSEYIKDDIATELPCHHFFHKPCVSIWLQKSGTCPVCR. Low complexity predominate over residues 685–701; it reads SAAASSDPDPDASPAND. The disordered stretch occupies residues 685–707; that stretch reads SAAASSDPDPDASPANDNAEEAP.

Binds ubiquitin-conjugating enzymes (E2s). In vitro, interacts with the ubiquitin-conjugating enzyme, UBE2D2. The phosphorylated form interacts with PRKAR1A, PRKAR2A and PRKAR2B. Binds the catalytic subunits of cAMP-dependent protein kinase. Interacts with MFHAS1. Interacts with TBC1D31; the interaction is direct and recruits PJA2 to centrosomes.

It is found in the cytoplasm. The protein localises to the cell membrane. Its subcellular location is the endoplasmic reticulum membrane. It localises to the golgi apparatus membrane. The protein resides in the synapse. It is found in the postsynaptic density. The protein localises to the cytoskeleton. Its subcellular location is the microtubule organizing center. It localises to the centrosome. The enzyme catalyses S-ubiquitinyl-[E2 ubiquitin-conjugating enzyme]-L-cysteine + [acceptor protein]-L-lysine = [E2 ubiquitin-conjugating enzyme]-L-cysteine + N(6)-ubiquitinyl-[acceptor protein]-L-lysine.. It participates in protein modification; protein ubiquitination. In terms of biological role, has E2-dependent E3 ubiquitin-protein ligase activity. Responsible for ubiquitination of cAMP-dependent protein kinase type I and type II-alpha/beta regulatory subunits and for targeting them for proteasomal degradation. Essential for PKA-mediated long-term memory processes. Through the ubiquitination of MFHAS1, positively regulates the TLR2 signaling pathway that leads to the activation of the downstream p38 and JNK MAP kinases and promotes the polarization of macrophages toward the pro-inflammatory M1 phenotype. Plays a role in ciliogenesis by ubiquitinating OFD1. In Mus musculus (Mouse), this protein is E3 ubiquitin-protein ligase Praja-2 (Pja2).